The chain runs to 282 residues: MTDKYAVFGNPISHSKSPFIHGQFAAPTQELLTYEAILAPVDGFEASLTAFFNAGGKGANVTVPFKEQAFALCDSLSPEAKLAGAVNTLSLLADGTIRGDNTDGLGLVADLIANLGSLQGKRVLLIGAGGAARGCILPLLNAGIAQLTISNRTHTKAQLLVDIFTSVDNGAFANRVTAVEMNELVGEFDIIINSTSASLAGELPPVPAHIITPQTVCYDMMYGASVTAFNQWALSQGAAKVIDGLGMLVGQAAKSFTLWRGVEPDTQVVLTLLRDKLKAEPK.

Shikimate-binding positions include 15–17 (SKS) and T62. The active-site Proton acceptor is the K66. The shikimate site is built by N87 and D103. NADP(+) contacts are provided by residues 127–131 (GAGGA), 151–156 (NRTHTK), and M220. Y222 lines the shikimate pocket. G244 is an NADP(+) binding site.

The protein belongs to the shikimate dehydrogenase family. Homodimer.

The catalysed reaction is shikimate + NADP(+) = 3-dehydroshikimate + NADPH + H(+). It functions in the pathway metabolic intermediate biosynthesis; chorismate biosynthesis; chorismate from D-erythrose 4-phosphate and phosphoenolpyruvate: step 4/7. Functionally, involved in the biosynthesis of the chorismate, which leads to the biosynthesis of aromatic amino acids. Catalyzes the reversible NADPH linked reduction of 3-dehydroshikimate (DHSA) to yield shikimate (SA). This Shewanella putrefaciens (strain CN-32 / ATCC BAA-453) protein is Shikimate dehydrogenase (NADP(+)).